A 352-amino-acid polypeptide reads, in one-letter code: Putative [LysW]-L-2-aminoadipate/[LysW]-L-glutamate phosphate reductase (352 aa).

NADP(+) contacts are provided by residues 10 to 13 and 34 to 36; these read SGFT and SRR. Cys151 is a catalytic residue. Asn319 provides a ligand contact to NADP(+).

This sequence belongs to the NAGSA dehydrogenase family. Type 1 subfamily. LysY sub-subfamily.

It localises to the cytoplasm. The enzyme catalyses [amino-group carrier protein]-C-terminal-N-(1-carboxy-5-oxopentan-1-yl)-L-glutamine + phosphate + NADP(+) = [amino-group carrier protein]-C-terminal-N-(1-carboxy-5-phosphooxy-5-oxopentan-1-yl)-L-glutamine + NADPH + H(+). It carries out the reaction [amino-group carrier protein]-C-terminal-gamma-(L-glutamyl-5-semialdehyde)-L-glutamate + phosphate + NADP(+) = [amino-group carrier protein]-C-terminal-gamma-(5-phospho-L-glutamyl)-L-glutamate + NADPH + H(+). Its pathway is amino-acid biosynthesis; L-lysine biosynthesis via AAA pathway; L-lysine from L-alpha-aminoadipate (Thermus route): step 3/5. The protein operates within amino-acid biosynthesis; L-arginine biosynthesis. In terms of biological role, involved in both the arginine and lysine biosynthetic pathways. The chain is Putative [LysW]-L-2-aminoadipate/[LysW]-L-glutamate phosphate reductase from Pyrobaculum islandicum (strain DSM 4184 / JCM 9189 / GEO3).